The primary structure comprises 156 residues: ATP synthase subunit b (156 aa).

Residues 7 to 29 (LLGQAIAFALFVWFCMKYVWPPI) form a helical membrane-spanning segment.

The protein belongs to the ATPase B chain family. F-type ATPases have 2 components, F(1) - the catalytic core - and F(0) - the membrane proton channel. F(1) has five subunits: alpha(3), beta(3), gamma(1), delta(1), epsilon(1). F(0) has three main subunits: a(1), b(2) and c(10-14). The alpha and beta chains form an alternating ring which encloses part of the gamma chain. F(1) is attached to F(0) by a central stalk formed by the gamma and epsilon chains, while a peripheral stalk is formed by the delta and b chains.

It is found in the cell inner membrane. Its function is as follows. F(1)F(0) ATP synthase produces ATP from ADP in the presence of a proton or sodium gradient. F-type ATPases consist of two structural domains, F(1) containing the extramembraneous catalytic core and F(0) containing the membrane proton channel, linked together by a central stalk and a peripheral stalk. During catalysis, ATP synthesis in the catalytic domain of F(1) is coupled via a rotary mechanism of the central stalk subunits to proton translocation. Functionally, component of the F(0) channel, it forms part of the peripheral stalk, linking F(1) to F(0). The chain is ATP synthase subunit b from Aliivibrio salmonicida (strain LFI1238) (Vibrio salmonicida (strain LFI1238)).